Here is a 275-residue protein sequence, read N- to C-terminus: Probable 2' cyclic ADP-D-ribose synthase TcpB (275 aa).

The segment covering 17 to 32 (RLKADDSREMSKEKQA) has biased composition (basic and acidic residues). A disordered region spans residues 17–66 (RLKADDSREMSKEKQAQSKAHKAQQAISSAKSLSTQKSKMSELERATRDG). Positions 39–48 (AQQAISSAKS) are enriched in low complexity. The span at 55–64 (KMSELERATR) shows a compositional bias: basic and acidic residues. The TIR domain occupies 142-275 (EEYDFFISHA…EIAKELHSLI (134 aa)). NAD(+)-binding positions include 151–152 (AS) and lysine 181. Glutamate 217 is a catalytic residue.

Homodimer. Interacts with host TIRAP, and probably host MYD88. Interacts with host TLR4, abolishes the interaction of host TIRAP with TLR4.

Its subcellular location is the secreted. The protein resides in the host cell membrane. The enzyme catalyses NAD(+) + H2O = ADP-D-ribose + nicotinamide + H(+). The catalysed reaction is NAD(+) = 2'cADPR + nicotinamide + H(+). In terms of biological role, virulence factor that interferes with host Toll-like receptor 2 (TLR2) and TLR4 signaling, resulting in the reduction of dendritic cell maturation, inhibition of pro-inflammatory cytokine secretion and impaired NF-kappa-B activation in macrophages. Binds host lipids. Has NAD(+) hydrolase (NADase) activity, catalyzes cleavage of NAD(+) into ADP-D-ribose (ADPR) and nicotinamide, also generates a cyclization variant of cyclic ADPR (cADPR), termed v-cADPR (probably 2'cADPR). This chain is Probable 2' cyclic ADP-D-ribose synthase TcpB (tcpB), found in Brucella melitensis biotype 2 (strain ATCC 23457).